Here is a 52-residue protein sequence, read N- to C-terminus: ERMES regulator 1 (52 aa).

At 1-27 the chain is on the mitochondrial intermembrane side; it reads MIFFFNQIRSIFTALHTPTQQIQLSRR. A helical transmembrane segment spans residues 28-46; it reads AFFQFLGYLGSCVVISLAA. Topologically, residues 47-52 are cytoplasmic; sequence QSKYVQ.

It belongs to the EMR1 family.

The protein localises to the mitochondrion outer membrane. In terms of biological role, mediates the formation of endoplasmic reticulum (ER)-mitochondria encounter structure (ERMES) foci, thereby contributing to the formation of ER-mitochondrial contact sites. This chain is ERMES regulator 1, found in Saccharomyces cerevisiae (strain ATCC 204508 / S288c) (Baker's yeast).